A 375-amino-acid polypeptide reads, in one-letter code: STAGKVIKCKAAVVWEPKKPFSIVEIEVAPPKAHEVRIKILASGICRSDDHVLSGALKVNFPIILGHEAAGVVESVGEGVTSMKPGDKVIPIFLPQCGECNSCRHPRGNVCKKSELGPFTGLLYDGTSRFTYQGKPVYHFVRTGTFTEYTVAPEDSVVKIDASAPLEKVCLIGCGFSTGYGAAINSAKVQPGSTCAVFGLGGVGLSAVMGCKAAGASRIIGIDINKEKFPKAKELGATECVNPLDYKKPINEVLFDMTDGEGVEYSFEVIGRTDTMTAALASCHNNYGTSVIVGVPPSASQIAFDPLLLFTGRTWKGSVFGGWKSKDAVPRLVSDFMGKKFILDPLITHTMPFEKINEGFELLRSGKSIRTVLTF.

Position 1 is an N-acetylserine (serine 1). Residues cysteine 46, histidine 67, cysteine 97, cysteine 100, cysteine 103, cysteine 111, and cysteine 174 each coordinate Zn(2+). NAD(+)-binding positions include 199–204 (GLGGVG), aspartate 223, lysine 228, 293–295 (VGV), and arginine 370.

Belongs to the zinc-containing alcohol dehydrogenase family. Class-I subfamily. In terms of assembly, multimeric (with different ratios of monomers). Zn(2+) serves as cofactor.

The protein localises to the cytoplasm. The catalysed reaction is a primary alcohol + NAD(+) = an aldehyde + NADH + H(+). The enzyme catalyses a secondary alcohol + NAD(+) = a ketone + NADH + H(+). The chain is Alcohol dehydrogenase 1B from Saara hardwickii (Indian spiny-tailed lizard).